The following is a 477-amino-acid chain: Interferon gamma receptor 1 (477 aa).

The N-terminal stretch at 1–25 (MGPQAAAGRMILLVVLMLSAKVGSG) is a signal peptide. At 26–254 (ALTSTEDPEP…PPFHDDRKDS (229 aa)) the chain is on the extracellular side. Residues Asn61 and Asn85 are each glycosylated (N-linked (GlcNAc...) asparagine). 4 cysteine pairs are disulfide-bonded: Cys83–Cys91, Cys128–Cys174, Cys203–Cys208, and Cys222–Cys243. Residues 255-275 (IWILVVAPLTVFTVVILVFAY) form a helical membrane-spanning segment. Residues 276–477 (WYTKKNSFKR…RLTGEAQELS (202 aa)) lie on the Cytoplasmic side of the membrane. 2 disordered regions span residues 335–386 (TVTA…LSSN) and 402–446 (SDSG…SGYD). Ser362 carries the post-translational modification Phosphoserine. Position 367 is a phosphothreonine (Thr367). Phosphoserine is present on Ser370. Thr373 and Thr375 each carry phosphothreonine. Over residues 375–386 (TQRRSFSLLSSN) the composition is skewed to polar residues. Ser379 and Ser402 each carry phosphoserine. The span at 402–416 (SDSGLVGSGSSISDL) shows a compositional bias: low complexity. Tyr445 bears the Phosphotyrosine mark.

The protein belongs to the type II cytokine receptor family. As to quaternary structure, monomer. Heterodimer with IFNGR2, to form the IFNG receptor complex. Interacts with JAK1. Interacts (when phosphorylated) with STAT1. Interacts with SOCS1. Post-translationally, phosphorylated at Ser/Thr residues. Phosphorylation of Tyr-445 is required for IFNG receptor signal transduction. Influenza virus infection leads to phosphorylation in a CSNK1A1-dependent manner. In terms of processing, ubiquitinated after phosphorylation in a CSNK1A1-dependent manner, leading to the lysosome-dependent degradation. Proteasomally degraded through 'Lys-48'-mediated ubiquitination. Ubiquitination is necessary for efficient IFNGR1 signaling.

The protein localises to the cell membrane. Functionally, receptor subunit for interferon gamma/INFG that plays crucial roles in antimicrobial, antiviral, and antitumor responses by activating effector immune cells and enhancing antigen presentation (, PubMed:20926559, PubMed:27286456). Associates with transmembrane accessory factor IFNGR2 to form a functional receptor. Upon ligand binding, the intracellular domain of IFNGR1 opens out to allow association of downstream signaling components JAK1 and JAK2. In turn, activated JAK1 phosphorylates IFNGR1 to form a docking site for STAT1. Subsequent phosphorylation of STAT1 leads to its dimerization, translocation to the nucleus, and stimulation of target gene transcription. STAT3 can also be activated in a similar manner although activation seems weaker. IFNGR1 intracellular domain phosphorylation also provides a docking site for SOCS1 that regulates the JAK-STAT pathway by competing with STAT1 binding to IFNGR1. This chain is Interferon gamma receptor 1, found in Mus musculus (Mouse).